The sequence spans 345 residues: Holliday junction branch migration complex subunit RuvB (345 aa).

A large ATPase domain (RuvB-L) region spans residues Met1 to Tyr182. ATP is bound by residues Ile21, Arg22, Gly63, Lys66, Thr67, Thr68, Glu129–Phe131, Arg172, Tyr182, and Arg219. Mg(2+) is bound at residue Thr67. The interval Ser183 to Lys253 is small ATPAse domain (RuvB-S). Residues Pro256 to Phe345 are head domain (RuvB-H). DNA is bound by residues Arg292, Arg311, and Arg316.

The protein belongs to the RuvB family. As to quaternary structure, homohexamer. Forms an RuvA(8)-RuvB(12)-Holliday junction (HJ) complex. HJ DNA is sandwiched between 2 RuvA tetramers; dsDNA enters through RuvA and exits via RuvB. An RuvB hexamer assembles on each DNA strand where it exits the tetramer. Each RuvB hexamer is contacted by two RuvA subunits (via domain III) on 2 adjacent RuvB subunits; this complex drives branch migration. In the full resolvosome a probable DNA-RuvA(4)-RuvB(12)-RuvC(2) complex forms which resolves the HJ.

It is found in the cytoplasm. It catalyses the reaction ATP + H2O = ADP + phosphate + H(+). Functionally, the RuvA-RuvB-RuvC complex processes Holliday junction (HJ) DNA during genetic recombination and DNA repair, while the RuvA-RuvB complex plays an important role in the rescue of blocked DNA replication forks via replication fork reversal (RFR). RuvA specifically binds to HJ cruciform DNA, conferring on it an open structure. The RuvB hexamer acts as an ATP-dependent pump, pulling dsDNA into and through the RuvAB complex. RuvB forms 2 homohexamers on either side of HJ DNA bound by 1 or 2 RuvA tetramers; 4 subunits per hexamer contact DNA at a time. Coordinated motions by a converter formed by DNA-disengaged RuvB subunits stimulates ATP hydrolysis and nucleotide exchange. Immobilization of the converter enables RuvB to convert the ATP-contained energy into a lever motion, pulling 2 nucleotides of DNA out of the RuvA tetramer per ATP hydrolyzed, thus driving DNA branch migration. The RuvB motors rotate together with the DNA substrate, which together with the progressing nucleotide cycle form the mechanistic basis for DNA recombination by continuous HJ branch migration. Branch migration allows RuvC to scan DNA until it finds its consensus sequence, where it cleaves and resolves cruciform DNA. This chain is Holliday junction branch migration complex subunit RuvB, found in Xanthomonas oryzae pv. oryzae (strain MAFF 311018).